A 276-amino-acid chain; its full sequence is Orotidine 5'-phosphate decarboxylase (276 aa).

The active-site Proton donor is the Lys-95.

Belongs to the OMP decarboxylase family. Type 2 subfamily.

It carries out the reaction orotidine 5'-phosphate + H(+) = UMP + CO2. It functions in the pathway pyrimidine metabolism; UMP biosynthesis via de novo pathway; UMP from orotate: step 2/2. The sequence is that of Orotidine 5'-phosphate decarboxylase (pyrF) from Mycolicibacterium smegmatis (strain ATCC 700084 / mc(2)155) (Mycobacterium smegmatis).